A 265-amino-acid polypeptide reads, in one-letter code: 6-oxopurine nucleoside phosphorylase (265 aa).

Residues Ser-10, 49–50 (RH), and 82–83 (SA) contribute to the phosphate site. Cystine bridges form between Cys-136-Cys-202 and Cys-162-Cys-190. Met-187 is a substrate binding site. Thr-188 lines the phosphate pocket. 211 to 213 (NYA) provides a ligand contact to substrate. Residues Cys-254 and Cys-256 are joined by a disulfide bond.

The protein belongs to the PNP/MTAP phosphorylase family. MTAP subfamily. In terms of assembly, homohexamer. Dimer of a homotrimer.

It catalyses the reaction a purine D-ribonucleoside + phosphate = a purine nucleobase + alpha-D-ribose 1-phosphate. It carries out the reaction guanosine + phosphate = alpha-D-ribose 1-phosphate + guanine. The catalysed reaction is inosine + phosphate = alpha-D-ribose 1-phosphate + hypoxanthine. Its pathway is purine metabolism; purine nucleoside salvage. Functionally, purine nucleoside phosphorylase which is highly specific for 6-oxopurine nucleosides. Cleaves guanosine or inosine to respective bases and sugar-1-phosphate molecules. Involved in purine salvage. The protein is 6-oxopurine nucleoside phosphorylase of Pyrococcus furiosus (strain ATCC 43587 / DSM 3638 / JCM 8422 / Vc1).